Reading from the N-terminus, the 1477-residue chain is Inositol hexakisphosphate and diphosphoinositol-pentakisphosphate kinase 1 (1477 aa).

Residues 27-47 (TRGLGMRPEESDSELLEDEED) form a disordered region. Residues 37–47 (SDSELLEDEED) show a composition bias toward acidic residues. 64 to 65 (KK) contributes to the substrate binding site. Residues Arg-145, Lys-198, His-205, Arg-224, 248–251 (EEFM), and 257–259 (DVK) contribute to the ATP site. A substrate-binding site is contributed by 224–225 (RK). 2 residues coordinate substrate: Lys-259 and Arg-273. Residues Ser-275, Asp-320, and 332–334 (DVN) contribute to the ATP site. 337–340 (SFVK) provides a ligand contact to substrate. The tract at residues 382–453 (PTTSGTMMEL…VLDITRLLLA (72 aa)) is polyphosphoinositide-binding domain. Residues 910–1016 (KGVEEEGSAP…PTEMKQSGLG (107 aa)) form a disordered region. Residues Ser-940 and Ser-983 each carry the phosphoserine modification. The segment covering 1001–1016 (FSSSRPPTEMKQSGLG) has biased composition (polar residues). Phosphoserine is present on residues Ser-1033, Ser-1069, Ser-1141, and Ser-1148. Disordered stretches follow at residues 1131 to 1248 (HSNQ…KPCQ) and 1438 to 1477 (REEV…SFSH). The segment covering 1164-1182 (SSGPSSTVSSAGPSSPTAV) has biased composition (low complexity). The segment covering 1446 to 1460 (CPPSNANPQSQSLAP) has biased composition (polar residues).

This sequence belongs to the histidine acid phosphatase family. VIP1 subfamily.

Its subcellular location is the cytoplasm. It is found in the cytosol. It localises to the cell membrane. It catalyses the reaction 1D-myo-inositol hexakisphosphate + ATP = 1-diphospho-1D-myo-inositol 2,3,4,5,6-pentakisphosphate + ADP. The catalysed reaction is 5-diphospho-1D-myo-inositol 1,2,3,4,6-pentakisphosphate + ATP + H(+) = 1,5-bis(diphospho)-1D-myo-inositol 2,3,4,6-tetrakisphosphate + ADP. In terms of biological role, bifunctional inositol kinase that acts in concert with the IP6K kinases IP6K1, IP6K2 and IP6K3 to synthesize the diphosphate group-containing inositol pyrophosphates diphosphoinositol pentakisphosphate, PP-InsP5, and bis-diphosphoinositol tetrakisphosphate, (PP)2-InsP4. PP-InsP5 and (PP)2-InsP4, also respectively called InsP7 and InsP8, regulate a variety of cellular processes, including apoptosis, vesicle trafficking, cytoskeletal dynamics, exocytosis, insulin signaling and neutrophil activation. Phosphorylates inositol hexakisphosphate (InsP6) at position 1 to produce PP-InsP5 which is in turn phosphorylated by IP6Ks to produce (PP)2-InsP4. Alternatively, phosphorylates PP-InsP5 at position 1, produced by IP6Ks from InsP6, to produce (PP)2-InsP4. Activated when cells are exposed to hyperosmotic stress. This chain is Inositol hexakisphosphate and diphosphoinositol-pentakisphosphate kinase 1, found in Bos taurus (Bovine).